Reading from the N-terminus, the 67-residue chain is Toxin Cex8 (67 aa).

Residue Ala1 is a signal peptide. Positions 2–65 (KEGYLVNIYT…SYPYPEKSCG (64 aa)) constitute an LCN-type CS-alpha/beta domain. 4 disulfide bridges follow: Cys13/Cys64, Cys17/Cys40, Cys26/Cys45, and Cys30/Cys47. Cys64 is modified (cysteine amide). Positions 65–67 (GRK) are excised as a propeptide.

The protein belongs to the long (4 C-C) scorpion toxin superfamily. Sodium channel inhibitor family. Beta subfamily. In terms of tissue distribution, expressed by the venom gland.

The protein resides in the secreted. Its function is as follows. Beta toxins bind voltage-independently at site-4 of sodium channels (Nav) and shift the voltage of activation toward more negative potentials thereby affecting sodium channel activation and promoting spontaneous and repetitive firing. In Centruroides exilicauda (Bark scorpion), this protein is Toxin Cex8.